Reading from the N-terminus, the 410-residue chain is Mating-type locus allele B5 protein (410 aa).

The variable domain between B alleles stretch occupies residues 1–110; sequence MSSDPNFSLT…FNVVSPAVVC (110 aa). A DNA-binding region (homeobox; TALE-type) is located at residues 107–184; that stretch reads AVVCRNLSED…NARRRSGWSH (78 aa). The interval 111 to 410 is highly conserved between B alleles; it reads RNLSEDLPAY…PFLCLSVAFV (300 aa). Disordered stretches follow at residues 201-241, 275-336, and 366-395; these read VRAK…TPAD, NKKT…PELS, and ILQS…PDEV. The span at 206–222 shows a compositional bias: low complexity; the sequence is SSSNQSTPPSPTSEYPS. Residues 276–308 carry the Nuclear localization signal motif; that stretch reads KKTPKPGMPRPVTTVTKRQPARKTKPAAKPKSR. A compositionally biased stretch (basic residues) spans 294–307; it reads QPARKTKPAAKPKS. A compositionally biased stretch (polar residues) spans 312–336; sequence PRASTTPSIDSTLDSSKLESTPELS. Residues 333-410 form a not essential for B5 function region; that stretch reads PELSMCSTAD…PFLCLSVAFV (78 aa). Over residues 375-388 the composition is skewed to basic residues; sequence RGNRKVKALPKRAG.

This sequence belongs to the TALE/M-ATYP homeobox family.

The protein resides in the nucleus. In terms of biological role, the B locus has at least 25 alleles, and any combination of two different B alleles yields a multimeric regulatory protein, that activates genes responsible for the pathogenicity and for the sexual development of the fungus within the corn plant. The protein is Mating-type locus allele B5 protein of Mycosarcoma maydis (Corn smut fungus).